The sequence spans 337 residues: Holliday junction branch migration complex subunit RuvB (337 aa).

The tract at residues 1–179 (MTHQVAVLHQ…FAFSARLSYY (179 aa)) is large ATPase domain (RuvB-L). Residues Leu-18, Arg-19, Gly-60, Lys-63, Thr-64, Ser-65, 126 to 128 (EDF), Arg-169, Tyr-179, and Arg-216 each bind ATP. Mg(2+) is bound at residue Thr-64. The small ATPAse domain (RuvB-S) stretch occupies residues 180 to 250 (SDQDLKEILV…VAEKALAMLL (71 aa)). A head domain (RuvB-H) region spans residues 253–337 (DWGLNEIDIK…KNLLSLGEGQ (85 aa)). DNA is bound by residues Lys-308 and Arg-313.

This sequence belongs to the RuvB family. Homohexamer. Forms an RuvA(8)-RuvB(12)-Holliday junction (HJ) complex. HJ DNA is sandwiched between 2 RuvA tetramers; dsDNA enters through RuvA and exits via RuvB. An RuvB hexamer assembles on each DNA strand where it exits the tetramer. Each RuvB hexamer is contacted by two RuvA subunits (via domain III) on 2 adjacent RuvB subunits; this complex drives branch migration. In the full resolvosome a probable DNA-RuvA(4)-RuvB(12)-RuvC(2) complex forms which resolves the HJ.

Its subcellular location is the cytoplasm. The catalysed reaction is ATP + H2O = ADP + phosphate + H(+). The RuvA-RuvB-RuvC complex processes Holliday junction (HJ) DNA during genetic recombination and DNA repair, while the RuvA-RuvB complex plays an important role in the rescue of blocked DNA replication forks via replication fork reversal (RFR). RuvA specifically binds to HJ cruciform DNA, conferring on it an open structure. The RuvB hexamer acts as an ATP-dependent pump, pulling dsDNA into and through the RuvAB complex. RuvB forms 2 homohexamers on either side of HJ DNA bound by 1 or 2 RuvA tetramers; 4 subunits per hexamer contact DNA at a time. Coordinated motions by a converter formed by DNA-disengaged RuvB subunits stimulates ATP hydrolysis and nucleotide exchange. Immobilization of the converter enables RuvB to convert the ATP-contained energy into a lever motion, pulling 2 nucleotides of DNA out of the RuvA tetramer per ATP hydrolyzed, thus driving DNA branch migration. The RuvB motors rotate together with the DNA substrate, which together with the progressing nucleotide cycle form the mechanistic basis for DNA recombination by continuous HJ branch migration. Branch migration allows RuvC to scan DNA until it finds its consensus sequence, where it cleaves and resolves cruciform DNA. In Chlamydia pneumoniae (Chlamydophila pneumoniae), this protein is Holliday junction branch migration complex subunit RuvB.